A 150-amino-acid chain; its full sequence is 3-hydroxyacyl-[acyl-carrier-protein] dehydratase FabZ (150 aa).

Residue His52 is part of the active site.

It belongs to the thioester dehydratase family. FabZ subfamily.

It is found in the cytoplasm. It carries out the reaction a (3R)-hydroxyacyl-[ACP] = a (2E)-enoyl-[ACP] + H2O. Functionally, involved in unsaturated fatty acids biosynthesis. Catalyzes the dehydration of short chain beta-hydroxyacyl-ACPs and long chain saturated and unsaturated beta-hydroxyacyl-ACPs. The polypeptide is 3-hydroxyacyl-[acyl-carrier-protein] dehydratase FabZ (Cupriavidus metallidurans (strain ATCC 43123 / DSM 2839 / NBRC 102507 / CH34) (Ralstonia metallidurans)).